The primary structure comprises 288 residues: Cell division protein ZipA (288 aa).

M1 is a topological domain (periplasmic). The helical transmembrane segment at 2–22 (EIGLREWLIVIGIIVIAGILF) threads the bilayer. The Cytoplasmic segment spans residues 23–288 (DGWRRMRGGK…ERRALTQRRG (266 aa)). Residues 48–138 (DEEETTSAEV…DDKPAQRITE (91 aa)) form a disordered region. Basic and acidic residues-rich tracts occupy residues 64–77 (LDTH…EHDL), 85–105 (RDNK…KDEP), and 122–138 (ARDD…RITE).

It belongs to the ZipA family. Interacts with FtsZ via their C-terminal domains.

Its subcellular location is the cell inner membrane. In terms of biological role, essential cell division protein that stabilizes the FtsZ protofilaments by cross-linking them and that serves as a cytoplasmic membrane anchor for the Z ring. Also required for the recruitment to the septal ring of downstream cell division proteins. In Pseudomonas syringae pv. tomato (strain ATCC BAA-871 / DC3000), this protein is Cell division protein ZipA.